A 596-amino-acid polypeptide reads, in one-letter code: Two-component response regulator ARR12 (596 aa).

The Response regulatory domain maps to 18 to 133 (RVLAVDDDQT…ELKNIWQHVV (116 aa)). Asp69 is modified (4-aspartylphosphate). The span at 138–153 (DKNRGSNNNGDKRDGS) shows a compositional bias: basic and acidic residues. Residues 138 to 192 (DKNRGSNNNGDKRDGSGNEGVGNSDQNNGKGNRKRKDQYNEDEDEDRDDNDDSCA) form a disordered region. Residues 158–167 (VGNSDQNNGK) are compositionally biased toward polar residues. Residues 177–189 (NEDEDEDRDDNDD) are compositionally biased toward acidic residues. The Nuclear localization signal motif lies at 194–197 (KKQR). Positions 197–247 (RVVWTVELHKKFVAAVNQLGYEKAMPKKILDLMNVEKLTRENVASHLQKFR) form a DNA-binding region, myb-like GARP. Positions 437–467 (NAVSSSTHPPPPAHNSNSINHQFDVSPLPHS) are disordered. Positions 450–459 (HNSNSINHQF) are enriched in polar residues.

This sequence belongs to the ARR family. Type-B subfamily. Binds the target DNA as a monomer. In terms of processing, two-component system major event consists of a His-to-Asp phosphorelay between a sensor histidine kinase (HK) and a response regulator (RR). In plants, the His-to-Asp phosphorelay involves an additional intermediate named Histidine-containing phosphotransfer protein (HPt). This multistep phosphorelay consists of a His-Asp-His-Asp sequential transfer of a phosphate group between first a His and an Asp of the HK protein, followed by the transfer to a conserved His of the HPt protein and finally the transfer to an Asp in the receiver domain of the RR protein. In terms of tissue distribution, detected in the whole plant. Predominantly expressed in leaves. Expressed at the root transition zone.

It is found in the nucleus. Functionally, transcriptional activator that binds specifically to the DNA sequence 5'-[AG]GATT-3'. Functions as a response regulator involved in His-to-Asp phosphorelay signal transduction system. Phosphorylation of the Asp residue in the receiver domain activates the ability of the protein to promote the transcription of target genes. Could directly activate some type-A response regulators in response to cytokinins. Involved in the root-meristem size determination through the regulation of cell differentiation. Involved in activating SHY2 during meristem growth and controls PIN expression via activation of SHY2. The polypeptide is Two-component response regulator ARR12 (ARR12) (Arabidopsis thaliana (Mouse-ear cress)).